The following is a 398-amino-acid chain: Acetate kinase 1 (398 aa).

N9 lines the Mg(2+) pocket. Position 16 (K16) interacts with ATP. R89 serves as a coordination point for substrate. The Proton donor/acceptor role is filled by D146. ATP is bound by residues H206–G210, D281–R283, and G329–N333. E384 is a binding site for Mg(2+).

Belongs to the acetokinase family. Homodimer. The cofactor is Mg(2+). Mn(2+) is required as a cofactor.

The protein localises to the cytoplasm. The enzyme catalyses acetate + ATP = acetyl phosphate + ADP. The protein operates within metabolic intermediate biosynthesis; acetyl-CoA biosynthesis; acetyl-CoA from acetate: step 1/2. Its function is as follows. Catalyzes the formation of acetyl phosphate from acetate and ATP. Can also catalyze the reverse reaction. The chain is Acetate kinase 1 from Aliivibrio fischeri (strain ATCC 700601 / ES114) (Vibrio fischeri).